Consider the following 637-residue polypeptide: Chaperone protein HtpG (637 aa).

The a; substrate-binding stretch occupies residues 1 to 345 (MSQQETHGFQ…SNDLPLNVSR (345 aa)). A b region spans residues 346 to 562 (EILQDNHITK…EGEMSSQMIK (217 aa)). The interval 563–637 (LMQAAGQPVP…MNQMLLANLK (75 aa)) is c.

This sequence belongs to the heat shock protein 90 family. In terms of assembly, homodimer.

It is found in the cytoplasm. In terms of biological role, molecular chaperone. Has ATPase activity. The sequence is that of Chaperone protein HtpG from Shewanella sp. (strain MR-7).